The following is a 398-amino-acid chain: uncharacterized protein (398 aa).

This is an uncharacterized protein from Bacillus subtilis (strain 168).